Consider the following 601-residue polypeptide: MEGSDLLTAGVMFLFAAVAAVPLASRLGIGAVLGYLLAGIAIGPWGLGFISDVDEILHFSELGVVFLMFIIGLELNPSKLWQLRRSIFGVGAAQVMLSAVVLAGLLMLTDFSWQAAVIGGIGLAMSSTAMALQLMREKGMNRSESGQLGFSVLLFQDLAVIPALALVPLLAGSADEHFDWIKVGMKVLAFAGMLIGGRYLLRPVFRFIADSGVREVFTAATLLLVLGSALFMDALGLSMALGTFIAGVLLAESEYRHELETAIDPFKGLLLGLFFISVGMSLNLGVLYTHLLWVAVSVIVLVAVKTLVLYLLARLYGIRSSERMQFAGVLSQGGEFAFVLFSTASSQRLFQGDQMSLLLVTVTLSMMTTPLLMKLVDKWLSRQLNGPEEEDEKPWVDDDKPQVIVVGFGRFGQVIGRLLMANKMRITVLERDISAVNLMRKYGYKVYYGDATQVELLRSAGAEAAESIVITCNEPEDTMKLVEICRQHFPHLHILARARGRVEAHELLQAGVTQFSRETFSSALELGRKTLVSLGMHPHQAQRAQLHFRRLDMRMLRELIPMHTDMVQISRAREARRELEEIFQREMQQERRQLDGWDEFE.

13 consecutive transmembrane segments (helical) span residues 4 to 24 (SDLLTAGVMFLFAAVAAVPLA), 29 to 49 (IGAVLGYLLAGIAIGPWGLGF), 55 to 75 (EILHFSELGVVFLMFIIGLEL), 87 to 107 (IFGVGAAQVMLSAVVLAGLLM), 115 to 135 (AAVIGGIGLAMSSTAMALQLM), 152 to 172 (VLLFQDLAVIPALALVPLLAG), 177 to 197 (HFDWIKVGMKVLAFAGMLIGG), 207 to 227 (FIADSGVREVFTAATLLLVLG), 230 to 250 (LFMDALGLSMALGTFIAGVLL), 262 to 282 (AIDPFKGLLLGLFFISVGMSL), 284 to 304 (LGVLYTHLLWVAVSVIVLVAV), 324 to 344 (MQFAGVLSQGGEFAFVLFSTA), and 356 to 376 (SLLLVTVTLSMMTTPLLMKLV). An RCK N-terminal domain is found at 400-519 (KPQVIVVGFG…AGVTQFSRET (120 aa)).

This sequence belongs to the monovalent cation:proton antiporter 2 (CPA2) transporter (TC 2.A.37) family. KefB subfamily. Interacts with the regulatory subunit KefG.

It localises to the cell inner membrane. In terms of biological role, pore-forming subunit of a potassium efflux system that confers protection against electrophiles. Catalyzes K(+)/H(+) antiport. In Citrobacter koseri (strain ATCC BAA-895 / CDC 4225-83 / SGSC4696), this protein is Glutathione-regulated potassium-efflux system protein KefB.